A 435-amino-acid chain; its full sequence is Adenylosuccinate synthetase (435 aa).

GTP contacts are provided by residues 11-17 (GDEGKGK) and 39-41 (GHT). Asp12 (proton acceptor) is an active-site residue. Asp12 and Gly39 together coordinate Mg(2+). Residues 12-15 (DEGK), 37-40 (NAGH), Thr128, Arg142, Gln223, Thr238, and Arg302 contribute to the IMP site. His40 serves as the catalytic Proton donor. 298-304 (SVTGRPR) contributes to the substrate binding site. GTP is bound by residues Arg304, 330–332 (KLD), and 412–414 (STG).

It belongs to the adenylosuccinate synthetase family. In terms of assembly, homodimer. Mg(2+) is required as a cofactor.

It localises to the cytoplasm. The catalysed reaction is IMP + L-aspartate + GTP = N(6)-(1,2-dicarboxyethyl)-AMP + GDP + phosphate + 2 H(+). Its pathway is purine metabolism; AMP biosynthesis via de novo pathway; AMP from IMP: step 1/2. Plays an important role in the de novo pathway of purine nucleotide biosynthesis. Catalyzes the first committed step in the biosynthesis of AMP from IMP. This chain is Adenylosuccinate synthetase, found in Coxiella burnetii (strain CbuK_Q154) (Coxiella burnetii (strain Q154)).